The following is a 178-amino-acid chain: Alkyl hydroperoxide reductase AhpD (178 aa).

Residue cysteine 131 is the Proton donor of the active site. A disulfide bridge links cysteine 131 with cysteine 134. The active-site Cysteine sulfenic acid (-SOH) intermediate is cysteine 134.

The protein belongs to the AhpD family.

It catalyses the reaction N(6)-[(R)-dihydrolipoyl]-L-lysyl-[lipoyl-carrier protein] + a hydroperoxide = N(6)-[(R)-lipoyl]-L-lysyl-[lipoyl-carrier protein] + an alcohol + H2O. Functionally, antioxidant protein with alkyl hydroperoxidase activity. Required for the reduction of the AhpC active site cysteine residues and for the regeneration of the AhpC enzyme activity. This chain is Alkyl hydroperoxide reductase AhpD, found in Methylocella silvestris (strain DSM 15510 / CIP 108128 / LMG 27833 / NCIMB 13906 / BL2).